The following is a 221-amino-acid chain: Catechol O-methyltransferase (221 aa).

V41, G65, L67, S71, E89, H94, A118, and D139 together coordinate S-adenosyl-L-methionine. 3 residues coordinate Mg(2+): D139, D165, and N166.

Belongs to the class I-like SAM-binding methyltransferase superfamily. Cation-dependent O-methyltransferase family. As to quaternary structure, homodimer. The cofactor is Mg(2+).

The catalysed reaction is a catechol + S-adenosyl-L-methionine = a guaiacol + S-adenosyl-L-homocysteine + H(+). Its activity is regulated as follows. The metal ion affects the meta and para-regiospecificity of the enzyme as well as the enzyme activity and thermal stability. Its function is as follows. Catechol O-methyltransferase that can use various catechol-like compounds. Can produce vanillic acid (meta-form) and iso-vanillic acid (para-form) from protocatechuic acid (PCA). Does not have a regiospecificity, and produces the meta- and para-forms of the products in equal proportion. This Niastella koreensis (strain DSM 17620 / KACC 11465 / NBRC 106392 / GR20-10) protein is Catechol O-methyltransferase.